The primary structure comprises 406 residues: Exodeoxyribonuclease 7 large subunit (406 aa).

The protein belongs to the XseA family. As to quaternary structure, heterooligomer composed of large and small subunits.

The protein resides in the cytoplasm. It catalyses the reaction Exonucleolytic cleavage in either 5'- to 3'- or 3'- to 5'-direction to yield nucleoside 5'-phosphates.. Its function is as follows. Bidirectionally degrades single-stranded DNA into large acid-insoluble oligonucleotides, which are then degraded further into small acid-soluble oligonucleotides. The protein is Exodeoxyribonuclease 7 large subunit of Desulforudis audaxviator (strain MP104C).